Here is a 191-residue protein sequence, read N- to C-terminus: Transposon Tn1546 resolvase (191 aa).

In terms of domain architecture, Resolvase/invertase-type recombinase catalytic spans 2–138 (RKIGYIRVSS…EGIELAKKEG (137 aa)). Ser10 (O-(5'-phospho-DNA)-serine intermediate) is an active-site residue. Residues 168-187 (VNQICEITNVSRASLYRKLS) constitute a DNA-binding region (H-T-H motif).

This sequence belongs to the site-specific recombinase resolvase family.

Its function is as follows. Resolvase catalyzes the resolution (a site-specific recombination) of the cointegrated replicon to yield the final transposition products. This chain is Transposon Tn1546 resolvase, found in Enterococcus faecium (Streptococcus faecium).